We begin with the raw amino-acid sequence, 359 residues long: Putative nucleotidyltransferase MAB21L1 (359 aa).

Residues 23–24 (RK) and 63–66 (YEGL) contribute to the a ribonucleoside 5'-triphosphate site. Mg(2+) is bound by residues Glu73 and Glu75. Residues Lys248 and 252–255 (SLLK) each bind a ribonucleoside 5'-triphosphate.

The protein belongs to the mab-21 family. In terms of assembly, monomer. Homodecamer; composed of 2 back to back homopentamers. The protein may exist as monomer in solution and oiligomerizes upon ligand binding.

It is found in the nucleus. Its function is as follows. Putative nucleotidyltransferase required for several aspects of embryonic development including normal development of the eye. It is unclear whether it displays nucleotidyltransferase activity in vivo. Binds single-stranded RNA (ssRNA). In Xenopus laevis (African clawed frog), this protein is Putative nucleotidyltransferase MAB21L1 (mab21l1).